Reading from the N-terminus, the 186-residue chain is Peptidyl-tRNA hydrolase (186 aa).

Tyr-14 serves as a coordination point for tRNA. The active-site Proton acceptor is His-19. Tyr-61, Asn-63, and Asn-107 together coordinate tRNA.

It belongs to the PTH family. As to quaternary structure, monomer.

It is found in the cytoplasm. It catalyses the reaction an N-acyl-L-alpha-aminoacyl-tRNA + H2O = an N-acyl-L-amino acid + a tRNA + H(+). Functionally, hydrolyzes ribosome-free peptidyl-tRNAs (with 1 or more amino acids incorporated), which drop off the ribosome during protein synthesis, or as a result of ribosome stalling. Its function is as follows. Catalyzes the release of premature peptidyl moieties from peptidyl-tRNA molecules trapped in stalled 50S ribosomal subunits, and thus maintains levels of free tRNAs and 50S ribosomes. The polypeptide is Peptidyl-tRNA hydrolase (Helicobacter pylori (strain J99 / ATCC 700824) (Campylobacter pylori J99)).